A 338-amino-acid polypeptide reads, in one-letter code: Ketol-acid reductoisomerase (NADP(+)) (338 aa).

The region spanning 1–181 (MQVYYDKDCD…GGGRTGIIET (181 aa)) is the KARI N-terminal Rossmann domain. NADP(+) is bound by residues 24 to 27 (FGSQ), Arg47, Ser50, Ser52, and 82 to 85 (DEFQ). His107 is an active-site residue. Gly133 is an NADP(+) binding site. The KARI C-terminal knotted domain occupies 182–327 (TFRDECETDL…RKLRAMMPWI (146 aa)). Positions 190, 194, 226, and 230 each coordinate Mg(2+). Position 251 (Ser251) interacts with substrate.

The protein belongs to the ketol-acid reductoisomerase family. Mg(2+) is required as a cofactor.

The catalysed reaction is (2R)-2,3-dihydroxy-3-methylbutanoate + NADP(+) = (2S)-2-acetolactate + NADPH + H(+). The enzyme catalyses (2R,3R)-2,3-dihydroxy-3-methylpentanoate + NADP(+) = (S)-2-ethyl-2-hydroxy-3-oxobutanoate + NADPH + H(+). The protein operates within amino-acid biosynthesis; L-isoleucine biosynthesis; L-isoleucine from 2-oxobutanoate: step 2/4. It participates in amino-acid biosynthesis; L-valine biosynthesis; L-valine from pyruvate: step 2/4. In terms of biological role, involved in the biosynthesis of branched-chain amino acids (BCAA). Catalyzes an alkyl-migration followed by a ketol-acid reduction of (S)-2-acetolactate (S2AL) to yield (R)-2,3-dihydroxy-isovalerate. In the isomerase reaction, S2AL is rearranged via a Mg-dependent methyl migration to produce 3-hydroxy-3-methyl-2-ketobutyrate (HMKB). In the reductase reaction, this 2-ketoacid undergoes a metal-dependent reduction by NADPH to yield (R)-2,3-dihydroxy-isovalerate. The protein is Ketol-acid reductoisomerase (NADP(+)) of Hydrogenovibrio crunogenus (strain DSM 25203 / XCL-2) (Thiomicrospira crunogena).